The following is a 236-amino-acid chain: Biosynthetic peptidoglycan transglycosylase (236 aa).

Residues 12–31 form a helical membrane-spanning segment; sequence ALLWFVAGSIVLVLVFRWVP.

Belongs to the glycosyltransferase 51 family.

Its subcellular location is the cell inner membrane. It catalyses the reaction [GlcNAc-(1-&gt;4)-Mur2Ac(oyl-L-Ala-gamma-D-Glu-L-Lys-D-Ala-D-Ala)](n)-di-trans,octa-cis-undecaprenyl diphosphate + beta-D-GlcNAc-(1-&gt;4)-Mur2Ac(oyl-L-Ala-gamma-D-Glu-L-Lys-D-Ala-D-Ala)-di-trans,octa-cis-undecaprenyl diphosphate = [GlcNAc-(1-&gt;4)-Mur2Ac(oyl-L-Ala-gamma-D-Glu-L-Lys-D-Ala-D-Ala)](n+1)-di-trans,octa-cis-undecaprenyl diphosphate + di-trans,octa-cis-undecaprenyl diphosphate + H(+). It functions in the pathway cell wall biogenesis; peptidoglycan biosynthesis. In terms of biological role, peptidoglycan polymerase that catalyzes glycan chain elongation from lipid-linked precursors. The polypeptide is Biosynthetic peptidoglycan transglycosylase (Pseudomonas putida (strain ATCC 700007 / DSM 6899 / JCM 31910 / BCRC 17059 / LMG 24140 / F1)).